The following is a 378-amino-acid chain: Succinate--CoA ligase [ADP-forming] subunit beta (378 aa).

Residues 9 to 237 (RDIVARYGIP…IAGEPESEIK (229 aa)) enclose the ATP-grasp domain. Residues Lys-45, 52–54 (GRG), Ile-94, and Glu-99 contribute to the ATP site. The Mg(2+) site is built by Asn-192 and Asp-206. Residues Asn-257 and 314 to 316 (GIT) contribute to the substrate site.

Belongs to the succinate/malate CoA ligase beta subunit family. Heterotetramer of two alpha and two beta subunits. Mg(2+) serves as cofactor.

The catalysed reaction is succinate + ATP + CoA = succinyl-CoA + ADP + phosphate. It catalyses the reaction GTP + succinate + CoA = succinyl-CoA + GDP + phosphate. It functions in the pathway carbohydrate metabolism; tricarboxylic acid cycle; succinate from succinyl-CoA (ligase route): step 1/1. In terms of biological role, succinyl-CoA synthetase functions in the citric acid cycle (TCA), coupling the hydrolysis of succinyl-CoA to the synthesis of either ATP or GTP and thus represents the only step of substrate-level phosphorylation in the TCA. The beta subunit provides nucleotide specificity of the enzyme and binds the substrate succinate, while the binding sites for coenzyme A and phosphate are found in the alpha subunit. The protein is Succinate--CoA ligase [ADP-forming] subunit beta of Herpetosiphon aurantiacus (strain ATCC 23779 / DSM 785 / 114-95).